A 72-amino-acid chain; its full sequence is uncharacterized protein (72 aa).

The protein resides in the plastid. It localises to the chloroplast. This is an uncharacterized protein from Oenothera berteroana (Bertero's evening primrose).